We begin with the raw amino-acid sequence, 149 residues long: Nucleoside diphosphate kinase (149 aa).

ATP is bound by residues K9, F57, R85, T91, R102, and N112. H115 functions as the Pros-phosphohistidine intermediate in the catalytic mechanism.

It belongs to the NDK family. Homotetramer. Requires Mg(2+) as cofactor.

The protein localises to the cytoplasm. It carries out the reaction a 2'-deoxyribonucleoside 5'-diphosphate + ATP = a 2'-deoxyribonucleoside 5'-triphosphate + ADP. It catalyses the reaction a ribonucleoside 5'-diphosphate + ATP = a ribonucleoside 5'-triphosphate + ADP. Functionally, major role in the synthesis of nucleoside triphosphates other than ATP. The ATP gamma phosphate is transferred to the NDP beta phosphate via a ping-pong mechanism, using a phosphorylated active-site intermediate. The chain is Nucleoside diphosphate kinase from Desulfitobacterium hafniense (strain Y51).